A 148-amino-acid chain; its full sequence is Glutamyl-tRNA(Gln) amidotransferase subunit C, mitochondrial (148 aa).

Belongs to the GatC family. In terms of assembly, subunit of the heterotrimeric GatCAB amidotransferase (AdT) complex, composed of A, B and C subunits.

It localises to the mitochondrion. It catalyses the reaction L-glutamyl-tRNA(Gln) + L-glutamine + ATP + H2O = L-glutaminyl-tRNA(Gln) + L-glutamate + ADP + phosphate + H(+). Its function is as follows. Allows the formation of correctly charged Gln-tRNA(Gln) through the transamidation of misacylated Glu-tRNA(Gln) in the mitochondria. The reaction takes place in the presence of glutamine and ATP through an activated gamma-phospho-Glu-tRNA(Gln). In Drosophila simulans (Fruit fly), this protein is Glutamyl-tRNA(Gln) amidotransferase subunit C, mitochondrial.